The following is a 237-amino-acid chain: Ubiquinone biosynthesis O-methyltransferase (237 aa).

Residues R39, G59, D80, and M124 each coordinate S-adenosyl-L-methionine.

Belongs to the methyltransferase superfamily. UbiG/COQ3 family.

The enzyme catalyses a 3-demethylubiquinol + S-adenosyl-L-methionine = a ubiquinol + S-adenosyl-L-homocysteine + H(+). It catalyses the reaction a 3-(all-trans-polyprenyl)benzene-1,2-diol + S-adenosyl-L-methionine = a 2-methoxy-6-(all-trans-polyprenyl)phenol + S-adenosyl-L-homocysteine + H(+). It functions in the pathway cofactor biosynthesis; ubiquinone biosynthesis. In terms of biological role, O-methyltransferase that catalyzes the 2 O-methylation steps in the ubiquinone biosynthetic pathway. The polypeptide is Ubiquinone biosynthesis O-methyltransferase (Vibrio atlanticus (strain LGP32) (Vibrio splendidus (strain Mel32))).